Consider the following 637-residue polypeptide: Chaperone protein HtpG (637 aa).

Positions 1-334 are a; substrate-binding; sequence MQDVVNSEKL…SSDLPLNISR (334 aa). Positions 335–558 are b; that stretch reads ETLQNNKVIE…DGSMDIRMER (224 aa). The segment at 559-637 is c; that stretch reads FLREQKQLNY…MNNVLVKVYQ (79 aa).

It belongs to the heat shock protein 90 family. Homodimer.

The protein localises to the cytoplasm. Molecular chaperone. Has ATPase activity. In Ehrlichia canis (strain Jake), this protein is Chaperone protein HtpG.